Consider the following 2000-residue polypeptide: Myosin-14 (2000 aa).

Ala2 bears the N-acetylalanine mark. Position 33 is a phosphothreonine (Thr33). The region spanning 47–97 (TARRMVWVPSELHGFEAAALRDEGEEEAEVELAESGRRLRLPRDQIQRMNP) is the Myosin N-terminal SH3-like domain. At Ser56 the chain carries Phosphoserine. Residues 101–804 (SKAEDMAELT…VLAQLEEERD (704 aa)) enclose the Myosin motor domain. 194-201 (GESGAGKT) lines the ATP pocket. The interval 682-704 (LSRLMATLSNTNPSFVRCIVPNH) is actin-binding. One can recognise an IQ domain in the interval 807 to 836 (VTDIIVSFQAAARGYLARRAFQRRQQQQSA). Residues 866 to 1951 (LQVTRQDEVL…VTTLRNRLRR (1086 aa)) adopt a coiled-coil conformation. Ser925 carries the post-translational modification Phosphoserine. A disordered region spans residues 1173–1197 (RGELEDTLDSTNAQQELRSKREQEV). Residue Thr1198 is modified to Phosphothreonine. Ser1249 and Ser1280 each carry phosphoserine. 5 disordered regions span residues 1260–1311 (ELSS…AELE), 1597–1629 (HERDLQGRDDAGEERRRQLAKQLRDAEVERDEE), 1720–1751 (SDRARRQAQQDRDEMAEEVASGNLSKAATLEE), 1910–1942 (AEEEASRAQAGRRRLQRELEDVTESAESMNREV), and 1967–2000 (LEEGVASDEEEAEGAEPGSAPGQEPEAPPPATPQ). Residues 1290–1304 (SDSERARSEAAEKLQ) show a composition bias toward basic and acidic residues. A compositionally biased stretch (basic and acidic residues) spans 1720–1732 (SDRARRQAQQDRD). The span at 1971-1980 (VASDEEEAEG) shows a compositional bias: acidic residues. Residues Ser1973 and Ser1985 each carry the phosphoserine modification. Residues 1981–1991 (AEPGSAPGQEP) are compositionally biased toward low complexity. Thr1998 carries the phosphothreonine modification.

Belongs to the TRAFAC class myosin-kinesin ATPase superfamily. Myosin family. Myosin is a hexameric protein that consists of 2 heavy chain subunits (MHC), 2 alkali light chain subunits (MLC) and 2 regulatory light chain subunits (MLC-2). As to expression, highest levels in lung, kidney, brain and colon, very low levels in liver and bladder and no expression in spleen or seminal vesicle (at protein level). Isoform 1 is expressed in liver, kidney and testis with low levels in skeletal muscle and heart. Isoform 1 and isoform 2 are expressed in brain and lung. Isoform 2 is the main isoform expressed in skeletal muscle and heart. Isoform 3 is limited to brain stem, cerebellum and spinal cord.

Functionally, cellular myosin that appears to play a role in cytokinesis, cell shape, and specialized functions such as secretion and capping. In Mus musculus (Mouse), this protein is Myosin-14 (Myh14).